The primary structure comprises 504 residues: ATP synthase subunit alpha (504 aa).

An ATP-binding site is contributed by 169-176; the sequence is GDRGTGKT.

Belongs to the ATPase alpha/beta chains family. F-type ATPases have 2 components, CF(1) - the catalytic core - and CF(0) - the membrane proton channel. CF(1) has five subunits: alpha(3), beta(3), gamma(1), delta(1), epsilon(1). CF(0) has three main subunits: a(1), b(2) and c(9-12). The alpha and beta chains form an alternating ring which encloses part of the gamma chain. CF(1) is attached to CF(0) by a central stalk formed by the gamma and epsilon chains, while a peripheral stalk is formed by the delta and b chains.

It is found in the cell inner membrane. The enzyme catalyses ATP + H2O + 4 H(+)(in) = ADP + phosphate + 5 H(+)(out). Produces ATP from ADP in the presence of a proton gradient across the membrane. The alpha chain is a regulatory subunit. In Leptospira biflexa serovar Patoc (strain Patoc 1 / Ames), this protein is ATP synthase subunit alpha.